Reading from the N-terminus, the 355-residue chain is Zinc transporter ZIP13 homolog (355 aa).

A glycan (N-linked (GlcNAc...) asparagine) is linked at N4. Helical transmembrane passes span 37 to 57, 79 to 99, and 118 to 138; these read VFSL…LIII, VLLS…LLPE, and LWVL…SGYA. N-linked (GlcNAc...) asparagine glycosylation occurs at N218. 2 consecutive transmembrane segments (helical) span residues 273–293 and 301–321; these read LLTA…SGVT and SWIM…TVLP.

Belongs to the ZIP transporter (TC 2.A.5) family. KE4/Catsup subfamily.

The protein localises to the basolateral cell membrane. It is found in the golgi apparatus membrane. Involved in zinc transport and homeostasis. The protein is Zinc transporter ZIP13 homolog (Zip99C) of Drosophila melanogaster (Fruit fly).